Reading from the N-terminus, the 298-residue chain is N-acetylmuramic acid 6-phosphate etherase (298 aa).

The region spanning 55–218 (IHAQVSGGGR…STGLMIKSGK (164 aa)) is the SIS domain. Glu-83 acts as the Proton donor in catalysis. Residue Glu-114 is part of the active site.

This sequence belongs to the GCKR-like family. MurNAc-6-P etherase subfamily. Homodimer.

The catalysed reaction is N-acetyl-D-muramate 6-phosphate + H2O = N-acetyl-D-glucosamine 6-phosphate + (R)-lactate. It participates in amino-sugar metabolism; 1,6-anhydro-N-acetylmuramate degradation. It functions in the pathway amino-sugar metabolism; N-acetylmuramate degradation. The protein operates within cell wall biogenesis; peptidoglycan recycling. Specifically catalyzes the cleavage of the D-lactyl ether substituent of MurNAc 6-phosphate, producing GlcNAc 6-phosphate and D-lactate. Together with AnmK, is also required for the utilization of anhydro-N-acetylmuramic acid (anhMurNAc) either imported from the medium or derived from its own cell wall murein, and thus plays a role in cell wall recycling. The protein is N-acetylmuramic acid 6-phosphate etherase of Shigella flexneri serotype 5b (strain 8401).